A 136-amino-acid chain; its full sequence is Histone H3.2 (136 aa).

A disordered region spans residues 1–43; that stretch reads MARTKQTARKSTGGKAPRKQLATKAARKSAPATGGVKKPHRFR. N6,N6,N6-trimethyllysine; alternate occurs at positions 5 and 10. N6,N6-dimethyllysine; alternate is present on residues Lys5 and Lys10. Residues Lys5 and Lys10 each carry the N6-methyllysine; alternate modification. The residue at position 10 (Lys10) is an N6-acetyllysine; alternate. Ser11 bears the Phosphoserine mark. Thr12 is subject to Phosphothreonine. At Lys15 the chain carries N6-acetyllysine. N6-methyllysine; alternate is present on residues Lys19, Lys24, and Lys28. N6-acetyllysine; alternate is present on residues Lys19 and Lys24. Lys28 is modified (N6,N6,N6-trimethyllysine; alternate). Lys28 is subject to N6,N6-dimethyllysine; alternate. Ser29 carries the phosphoserine modification. At Lys37 the chain carries N6,N6,N6-trimethyllysine; alternate. Lys37 is subject to N6,N6-dimethyllysine; alternate. N6-methyllysine; alternate is present on Lys37.

This sequence belongs to the histone H3 family. In terms of assembly, the nucleosome is a histone octamer containing two molecules each of H2A, H2B, H3 and H4 assembled in one H3-H4 heterotetramer and two H2A-H2B heterodimers. The octamer wraps approximately 147 bp of DNA. In terms of processing, acetylation is generally linked to gene activation. Can be acetylated to form H3K9ac, H3K14ac, H3K18ac and H3K23ac. H3K9ac could compete with H3K9me and prevent gene silencing. H3K9ac is restricted to euchromatin. Post-translationally, methylated to form mainly H3K4me, H3K9me, H3K18me, H3K23me, H3K27me and H3K36me. H3K4me1/2/3, H3K9me3, H3K27me3 and H3K36me1/2/3 are typical marks for euchromatin, whereas heterochromatic chromocenters are enriched in H3K9me1/2 and H3K27me1/2. H2BK143ub1 is probably prerequisite for H3K4me. Can be phosphorylated to form H3S10ph, H3T11ph and H3S28ph.

It is found in the nucleus. The protein resides in the chromosome. Its function is as follows. Core component of nucleosome. Nucleosomes wrap and compact DNA into chromatin, limiting DNA accessibility to the cellular machineries which require DNA as a template. Histones thereby play a central role in transcription regulation, DNA repair, DNA replication and chromosomal stability. DNA accessibility is regulated via a complex set of post-translational modifications of histones, also called histone code, and nucleosome remodeling. The sequence is that of Histone H3.2 from Brassica napus (Rape).